Consider the following 714-residue polypeptide: Penicillin-binding protein 1F (714 aa).

Over 1-12 the chain is Cytoplasmic; sequence MFKIKKKKLFIP. Residues 13–33 form a helical; Signal-anchor for type II membrane protein membrane-spanning segment; that stretch reads IIILVLTAFLALIGYISIIFL. The Extracellular portion of the chain corresponds to 34–714; it reads GHYVIDEKKL…DYVQPKLFSS (681 aa). The interval 49–217 is transglycosylase; sequence SKIVDQNGDE…STYSPILHPD (169 aa). The Proton donor; for transglycosylase activity role is filled by glutamate 87. A transpeptidase region spans residues 297–592; the sequence is SKLQKTAYQV…SSYPTRLFKD (296 aa). Catalysis depends on serine 359, which acts as the Acyl-ester intermediate; for transpeptidase activity.

The protein in the N-terminal section; belongs to the glycosyltransferase 51 family. This sequence in the C-terminal section; belongs to the transpeptidase family.

It is found in the cell membrane. The enzyme catalyses [GlcNAc-(1-&gt;4)-Mur2Ac(oyl-L-Ala-gamma-D-Glu-L-Lys-D-Ala-D-Ala)](n)-di-trans,octa-cis-undecaprenyl diphosphate + beta-D-GlcNAc-(1-&gt;4)-Mur2Ac(oyl-L-Ala-gamma-D-Glu-L-Lys-D-Ala-D-Ala)-di-trans,octa-cis-undecaprenyl diphosphate = [GlcNAc-(1-&gt;4)-Mur2Ac(oyl-L-Ala-gamma-D-Glu-L-Lys-D-Ala-D-Ala)](n+1)-di-trans,octa-cis-undecaprenyl diphosphate + di-trans,octa-cis-undecaprenyl diphosphate + H(+). It carries out the reaction Preferential cleavage: (Ac)2-L-Lys-D-Ala-|-D-Ala. Also transpeptidation of peptidyl-alanyl moieties that are N-acyl substituents of D-alanine.. It functions in the pathway cell wall biogenesis; peptidoglycan biosynthesis. Its function is as follows. Cell wall formation. May be involved in outgrowth of the germinated spore or it could function in the synthesis of the germ cell wall. This Bacillus subtilis (strain 168) protein is Penicillin-binding protein 1F (pbpF).